The sequence spans 187 residues: Ribosome-recycling factor (187 aa).

Belongs to the RRF family.

Its subcellular location is the cytoplasm. Its function is as follows. Responsible for the release of ribosomes from messenger RNA at the termination of protein biosynthesis. May increase the efficiency of translation by recycling ribosomes from one round of translation to another. This Rhodopseudomonas palustris (strain BisB5) protein is Ribosome-recycling factor.